We begin with the raw amino-acid sequence, 201 residues long: Recombination protein RecR (201 aa).

The C4-type zinc finger occupies 57-72 (CADCRTFTEQDVCNIC). The Toprim domain occupies 81–176 (GQICVVESPA…EASRIAHGVP (96 aa)).

It belongs to the RecR family.

In terms of biological role, may play a role in DNA repair. It seems to be involved in an RecBC-independent recombinational process of DNA repair. It may act with RecF and RecO. The protein is Recombination protein RecR of Salmonella agona (strain SL483).